Reading from the N-terminus, the 245-residue chain is Probable GTP-binding protein EngB (245 aa).

One can recognise an EngB-type G domain in the interval 46–223; that stretch reads DVPEIAFVGR…AQHLWDWAHP (178 aa). Residues 54–61, 81–85, 103–106, 173–176, and 202–204 each bind GTP; these read GRSNAGKS, GRTQS, DLPG, TKSD, and FSS. Mg(2+) contacts are provided by S61 and T83. The interval 219–245 is disordered; it reads DWAHPPEKPAKKPKAEPAAEAATGDEG. Positions 222 to 235 are enriched in basic and acidic residues; the sequence is HPPEKPAKKPKAEP. The span at 236-245 shows a compositional bias: low complexity; it reads AAEAATGDEG.

It belongs to the TRAFAC class TrmE-Era-EngA-EngB-Septin-like GTPase superfamily. EngB GTPase family. Mg(2+) serves as cofactor.

Its function is as follows. Necessary for normal cell division and for the maintenance of normal septation. In Polaromonas sp. (strain JS666 / ATCC BAA-500), this protein is Probable GTP-binding protein EngB.